The primary structure comprises 147 residues: Anti-sigma F factor (147 aa).

Belongs to the anti-sigma-factor family.

The enzyme catalyses L-seryl-[protein] + ATP = O-phospho-L-seryl-[protein] + ADP + H(+). It carries out the reaction L-threonyl-[protein] + ATP = O-phospho-L-threonyl-[protein] + ADP + H(+). Its function is as follows. Binds to sigma F and blocks its ability to form an RNA polymerase holoenzyme (E-sigma F). Phosphorylates SpoIIAA on a serine residue. This phosphorylation may enable SpoIIAA to act as an anti-anti-sigma factor that counteracts SpoIIAB and thus releases sigma F from inhibition. The polypeptide is Anti-sigma F factor (Heyndrickxia coagulans (Weizmannia coagulans)).